Here is a 92-residue protein sequence, read N- to C-terminus: Small ribosomal subunit protein uS19 (92 aa).

This sequence belongs to the universal ribosomal protein uS19 family.

In terms of biological role, protein S19 forms a complex with S13 that binds strongly to the 16S ribosomal RNA. The chain is Small ribosomal subunit protein uS19 from Pelobacter propionicus (strain DSM 2379 / NBRC 103807 / OttBd1).